The following is a 226-amino-acid chain: Small ribosomal subunit protein uS3 (226 aa).

Positions 39 to 107 constitute a KH type-2 domain; it reads IRKFIKNKLY…NILINITEIK (69 aa).

The protein belongs to the universal ribosomal protein uS3 family. As to quaternary structure, part of the 30S ribosomal subunit. Forms a tight complex with proteins S10 and S14.

Its function is as follows. Binds the lower part of the 30S subunit head. Binds mRNA in the 70S ribosome, positioning it for translation. This is Small ribosomal subunit protein uS3 from Acetivibrio thermocellus (strain ATCC 27405 / DSM 1237 / JCM 9322 / NBRC 103400 / NCIMB 10682 / NRRL B-4536 / VPI 7372) (Clostridium thermocellum).